We begin with the raw amino-acid sequence, 135 residues long: Succinate dehydrogenase assembly factor 3, mitochondrial (135 aa).

Residues 73–101 form a disordered region; sequence KENSNNNDNYNNNNNDNNNDNNNFINIGQ. Positions 75–95 are enriched in low complexity; that stretch reads NSNNNDNYNNNNNDNNNDNNN.

The protein belongs to the complex I LYR family. SDHAF3 subfamily. In terms of assembly, interacts with the iron-sulfur protein subunit within the SDH catalytic dimer.

It is found in the mitochondrion matrix. Functionally, plays an essential role in the assembly of succinate dehydrogenase (SDH), an enzyme complex (also referred to as respiratory complex II) that is a component of both the tricarboxylic acid (TCA) cycle and the mitochondrial electron transport chain, and which couples the oxidation of succinate to fumarate with the reduction of ubiquinone (coenzyme Q) to ubiquinol. Promotes maturation of the iron-sulfur protein subunit of the SDH catalytic dimer, protecting it from the deleterious effects of oxidants. May act together with SDHAF1. The sequence is that of Succinate dehydrogenase assembly factor 3, mitochondrial (acn9) from Dictyostelium discoideum (Social amoeba).